Reading from the N-terminus, the 337-residue chain is MVREEVAVSTRTLQWKCVESRTDSKRLYYGRFILAPLMKGQADTIGIAMRRALLGEIEGTCITRVKSEKVPNEYYTIVGIEESVHEILMNLKEIVLRSHLYGTRDASICVRGPRYVTAQDIIPPPSVEIVDTTQHIASLTEPIDLCIELQIERDRGYRMKTPNNYQDGSYPIDAVSMPVRNANHSIHSYGNRNEKQEILFLEIWTNGSLTPKEALHEASRNLIDLFIPFLHAEEQDIVLEDNPNRFTVPLFTFHDRLANIRKNKKGIALKCIFIDQSELPPRTYNCLKRSNIHTLLDLLSNSQEDLMRIEHFRIEDVKQILDILQKHFTIDLPKNKF.

The segment at M1–E233 is alpha N-terminal domain (alpha-NTD). Residues G266–F337 are alpha C-terminal domain (alpha-CTD).

This sequence belongs to the RNA polymerase alpha chain family. As to quaternary structure, in plastids the minimal PEP RNA polymerase catalytic core is composed of four subunits: alpha, beta, beta', and beta''. When a (nuclear-encoded) sigma factor is associated with the core the holoenzyme is formed, which can initiate transcription.

It localises to the plastid. Its subcellular location is the chloroplast. It catalyses the reaction RNA(n) + a ribonucleoside 5'-triphosphate = RNA(n+1) + diphosphate. Its function is as follows. DNA-dependent RNA polymerase catalyzes the transcription of DNA into RNA using the four ribonucleoside triphosphates as substrates. This chain is DNA-directed RNA polymerase subunit alpha, found in Liriodendron tulipifera (Tuliptree).